The primary structure comprises 122 residues: Small ribosomal subunit protein uS13 (122 aa).

The interval 93-122 (RRGLPVRGQRTKTNARTRKGPKKTVAGKKK) is disordered.

It belongs to the universal ribosomal protein uS13 family. Part of the 30S ribosomal subunit. Forms a loose heterodimer with protein S19. Forms two bridges to the 50S subunit in the 70S ribosome.

Its function is as follows. Located at the top of the head of the 30S subunit, it contacts several helices of the 16S rRNA. In the 70S ribosome it contacts the 23S rRNA (bridge B1a) and protein L5 of the 50S subunit (bridge B1b), connecting the 2 subunits; these bridges are implicated in subunit movement. Contacts the tRNAs in the A and P-sites. The chain is Small ribosomal subunit protein uS13 from Micrococcus luteus (strain ATCC 4698 / DSM 20030 / JCM 1464 / CCM 169 / CCUG 5858 / IAM 1056 / NBRC 3333 / NCIMB 9278 / NCTC 2665 / VKM Ac-2230) (Micrococcus lysodeikticus).